The sequence spans 253 residues: 5-oxoprolinase subunit A (253 aa).

Belongs to the LamB/PxpA family. Forms a complex composed of PxpA, PxpB and PxpC.

It catalyses the reaction 5-oxo-L-proline + ATP + 2 H2O = L-glutamate + ADP + phosphate + H(+). Functionally, catalyzes the cleavage of 5-oxoproline to form L-glutamate coupled to the hydrolysis of ATP to ADP and inorganic phosphate. This chain is 5-oxoprolinase subunit A, found in Bacillus anthracis (strain CDC 684 / NRRL 3495).